A 400-amino-acid polypeptide reads, in one-letter code: Hyaluronan and proteoglycan link protein 4 (400 aa).

A signal peptide spans 1 to 30 (MACAPGALGHRALWAVAWGLLLLVPVLAGA). The Ig-like C2-type domain occupies 47–155 (SVVVQTAPGQ…VTNELEDDVG (109 aa)). Intrachain disulfides connect C69-C144, C186-C264, C210-C231, C291-C361, and C316-C337. N-linked (GlcNAc...) asparagine glycosylation is present at N133. 2 Link domains span residues 164-266 (VVFP…FCFT) and 271-363 (GRVF…YCYR).

This sequence belongs to the HAPLN family. In terms of tissue distribution, expressed predominantly in brain where it is found mainly throughout the midbrain and hindbrain in a perineuronal net pattern.

The protein localises to the secreted. Its subcellular location is the extracellular space. The protein resides in the extracellular matrix. Its function is as follows. Essential for the proper localization of brevican (BCAN), mainly as a perineuronal nets (PNNs)-type deposition in the brainstem and cerebellum thereby playing a key role in the formation and structural organization of PNNs. Contributes to the formation and transmission of inhibitory GABAergic synapses between Purkinje cells and deep cerebellar nuclei neurons. This chain is Hyaluronan and proteoglycan link protein 4 (Hapln4), found in Mus musculus (Mouse).